The primary structure comprises 104 residues: 10 kDa heat shock protein, mitochondrial (104 aa).

Residue Ser-81 is modified to Phosphoserine.

The protein belongs to the GroES chaperonin family. As to quaternary structure, homohexamer.

It localises to the mitochondrion matrix. Its function is as follows. Eukaryotic CPN10 homolog which is essential for mitochondrial protein biogenesis, together with CPN60. Binds to CPN60 in the presence of Mg-ATP and suppresses the ATPase activity of the latter. This Schizosaccharomyces pombe (strain 972 / ATCC 24843) (Fission yeast) protein is 10 kDa heat shock protein, mitochondrial (hsp10).